The primary structure comprises 299 residues: Small ribosomal subunit protein uS2 (299 aa).

A disordered region spans residues 210 to 299 (AEKEEQTQVV…GAATDNSWAS (90 aa)). The span at 275-285 (WASTGTATVGP) shows a compositional bias: polar residues.

Belongs to the universal ribosomal protein uS2 family. In terms of assembly, component of the small ribosomal subunit. Mature ribosomes consist of a small (40S) and a large (60S) subunit. The 40S subunit contains about 33 different proteins and 1 molecule of RNA (18S). The 60S subunit contains about 49 different proteins and 3 molecules of RNA (28S, 5.8S and 5S). Interacts with ribosomal protein S21.

Its subcellular location is the cytoplasm. In terms of biological role, required for the assembly and/or stability of the 40S ribosomal subunit. Required for the processing of the 20S rRNA-precursor to mature 18S rRNA in a late step of the maturation of 40S ribosomal subunits. The sequence is that of Small ribosomal subunit protein uS2 from Ornithodoros parkeri (Soft tick).